A 22-amino-acid chain; its full sequence is QKCCSGGSCPLYFRDRLICPCC.

At Gln1 the chain carries Pyrrolidone carboxylic acid. 3 disulfide bridges follow: Cys3–Cys21, Cys4–Cys19, and Cys9–Cys22.

This sequence belongs to the conotoxin M superfamily. Expressed by the venom duct.

The protein resides in the secreted. Probable competitive antagonist of fish muscle acetylcholine receptor. Inhibits postsynaptic nicotinic acetylcholine receptors (nAChRs) from fish (zebrafish and goldfish) and frogs (IC(50)=0.1 uM). Protects these receptors from block by alpha-bungarotoxin and alpha-conotoxin EI. Does not block nAChRs at the neuromuscular junction of Rana pipiens. Shows a weak inhibition on mammalian adult and fetal muscle nAChRs (alpha-1-beta-1-delta-epsilon/CHRNA1-CHRNB1-CHRND-CHRNE and alpha-1 beta-1 gamma delta/CHRNA1-CHRNB1-CHRNG-CHRND) (IC(50)=3-45 uM). In vivo, induces paralysis in goldfish (Carassius auratus) but not mice. This Conus magus (Magical cone) protein is Conotoxin MIIIJ.